The sequence spans 339 residues: Dihydroorotate dehydrogenase (quinone) (339 aa).

FMN is bound by residues 61–65 (AGLDK) and threonine 85. Lysine 65 lines the substrate pocket. 110-114 (NRMGF) contacts substrate. FMN contacts are provided by asparagine 138 and asparagine 171. Residue asparagine 171 participates in substrate binding. Serine 174 (nucleophile) is an active-site residue. Substrate is bound at residue asparagine 176. FMN-binding residues include lysine 216 and threonine 244. 245–246 (NT) serves as a coordination point for substrate. FMN is bound by residues glycine 267, glycine 296, and 317-318 (YS).

The protein belongs to the dihydroorotate dehydrogenase family. Type 2 subfamily. As to quaternary structure, monomer. It depends on FMN as a cofactor.

Its subcellular location is the cell membrane. It catalyses the reaction (S)-dihydroorotate + a quinone = orotate + a quinol. It functions in the pathway pyrimidine metabolism; UMP biosynthesis via de novo pathway; orotate from (S)-dihydroorotate (quinone route): step 1/1. Its function is as follows. Catalyzes the conversion of dihydroorotate to orotate with quinone as electron acceptor. This Pseudomonas fluorescens (strain ATCC BAA-477 / NRRL B-23932 / Pf-5) protein is Dihydroorotate dehydrogenase (quinone).